Reading from the N-terminus, the 205-residue chain is Ribonuclease HII (205 aa).

The RNase H type-2 domain maps to 16-205; that stretch reads VSEVGIDEVG…KSFLKKSKLI (190 aa). A divalent metal cation is bound by residues aspartate 22, glutamate 23, and aspartate 118.

It belongs to the RNase HII family. Mn(2+) is required as a cofactor. It depends on Mg(2+) as a cofactor.

It is found in the cytoplasm. The catalysed reaction is Endonucleolytic cleavage to 5'-phosphomonoester.. Functionally, endonuclease that specifically degrades the RNA of RNA-DNA hybrids. This chain is Ribonuclease HII, found in Prochlorococcus marinus (strain AS9601).